A 116-amino-acid chain; its full sequence is Large ribosomal subunit protein bL17 (116 aa).

The protein belongs to the bacterial ribosomal protein bL17 family. Part of the 50S ribosomal subunit. Contacts protein L32.

This is Large ribosomal subunit protein bL17 from Cyanothece sp. (strain PCC 7425 / ATCC 29141).